The following is a 206-amino-acid chain: MKTTLILASTSPYRQQLLQKLTPNFTCVSPEVDETPLADETAQALVVRLAQAKAIAGAERYLAELGLSNLHTAAEALVIGSDQVAVIDGAIIGKPLTQANAINQLQQASGKAITFYTGLAVYNSHSHKMTCEIVPFTVHFRTLSLAQITYYVETELPLYCAGSFKSEGLGIALFERLEGDDPNTLIGLPLIALIDMLAEHGETVLS.

The Proton acceptor role is filled by D82.

Belongs to the Maf family. YceF subfamily. The cofactor is a divalent metal cation.

Its subcellular location is the cytoplasm. It catalyses the reaction N(7)-methyl-GTP + H2O = N(7)-methyl-GMP + diphosphate + H(+). Its function is as follows. Nucleoside triphosphate pyrophosphatase that hydrolyzes 7-methyl-GTP (m(7)GTP). May have a dual role in cell division arrest and in preventing the incorporation of modified nucleotides into cellular nucleic acids. This is 7-methyl-GTP pyrophosphatase from Shewanella denitrificans (strain OS217 / ATCC BAA-1090 / DSM 15013).